The primary structure comprises 326 residues: MRALAVVAMVATAFLAAAVHAEQCGSQAGGAVCPNCLCCSQFGWCGSTSDYCGAGCQSQCSAAGCGGGGPTPPSGSGGSGVASIVSRSLFDQMLLHRNDAACPASNFYTYDAFVAAASAFPGFAAAGGDADTNKREVAAFLAQTSHETTGGWATAPDGPYAWGYCFKEENGGAAGPDYCQQSAQWPCAAGKKYYGRGPIQLSYNFNYGPAGQAIGADLLGDPDLVASDATVSFDTAFWFWMTPQSPKPSCHAVATGQWTPSADDQAAGRVPGYGVITNIINGGLECGHGEDDRVADRIGFYKRYCDILGVSYDANLDCYSQRPFGS.

A signal peptide spans 1-21 (MRALAVVAMVATAFLAAAVHA). The 41-residue stretch at 22–62 (EQCGSQAGGAVCPNCLCCSQFGWCGSTSDYCGAGCQSQCSA) folds into the Chitin-binding type-1 domain. Disulfide bonds link cysteine 24–cysteine 39, cysteine 33–cysteine 45, cysteine 36–cysteine 65, cysteine 38–cysteine 52, cysteine 56–cysteine 60, cysteine 102–cysteine 165, cysteine 179–cysteine 187, and cysteine 286–cysteine 318. The active-site Proton donor is the glutamate 147.

It belongs to the glycosyl hydrolase 19 family. Chitinase class I subfamily. As to expression, expressed in meristems and at lower levels in roots and sheaths.

It carries out the reaction Random endo-hydrolysis of N-acetyl-beta-D-glucosaminide (1-&gt;4)-beta-linkages in chitin and chitodextrins.. In terms of biological role, hydrolyzes chitin and plays a role in defense against fungal pathogens containing chitin. Its overexpression confers enhanced resistance to sheath blight pathogen (R.solani). The chain is Chitinase 12 (Cht12) from Oryza sativa subsp. japonica (Rice).